The sequence spans 270 residues: MTLSLDATQLDRYSRHIIMDEVGPEGQGRLLSSRVVVVGAGGLGAPAIQYLAAVGVGELVVVDDDVVERSNLQRQVVHCDDDVGTPKAESAAAFVRGLNPDVSVEPVEARVDKSNVHEVVAGSDVVVDASDNFPTRYLLNDVCRFEGIPLVHGAIYKFEGQATTLVPDGPCYRCLFPEAPEPGTVPDCATTGVLGVLPGTVGCIQATEAMKLLLDEGEALDGRLLFYDAMDMTFETVPYRTNPDCPVCGEGGVDSIEDIDYVESCAISLD.

ATP is bound by residues G42, D63, 70-74 (SNLQR), and K87. K113 participates in a covalent cross-link: Glycyl lysine isopeptide (Lys-Gly) (interchain with G-Cter in SAMP2). Residue 131–132 (DN) participates in ATP binding. Positions 171 and 174 each coordinate Zn(2+). C188 (glycyl thioester intermediate) is an active-site residue. C245 and C248 together coordinate Zn(2+).

The protein belongs to the HesA/MoeB/ThiF family. In terms of assembly, interacts with NcsA. It depends on Zn(2+) as a cofactor. Sampylated at Lys-113 with the archaeal ubiquitin-like protein SAMP2. Also sampylated with SAMP1.

The enzyme catalyses [small archaeal modifier protein]-C-terminal Gly-Gly + ATP + H(+) = [small archaeal modifier protein]-C-terminal Gly-Gly-AMP + diphosphate. In terms of biological role, likely activates multiple ubiquitin-like SAMPs for protein conjugation as well as for sulfur transfer, via ATP-dependent adenylation at their C-terminus. In fact, it is required for the formation of all three SAMP1-, SAMP2- and SAMP3-protein conjugates, and for molybdenum cofactor (MoCo) biosynthesis and thiolation of tRNAs. The polypeptide is SAMP-activating enzyme E1 (ubaA) (Haloferax volcanii (strain ATCC 29605 / DSM 3757 / JCM 8879 / NBRC 14742 / NCIMB 2012 / VKM B-1768 / DS2) (Halobacterium volcanii)).